Here is a 427-residue protein sequence, read N- to C-terminus: Galactose-3-O-sulfotransferase 3 (427 aa).

The Cytoplasmic segment spans residues 1 to 19; sequence MPPIFQRLQQATKMSRRKI. Residues 20–40 traverse the membrane as a helical; Signal-anchor for type II membrane protein segment; sequence LLLVLGCSTLSLLIHQGAQLS. Topologically, residues 41–427 are lumenal; the sequence is WYPKLFPLSC…RPIRALRPGH (387 aa). Residues N90, N109, N176, and N301 are each glycosylated (N-linked (GlcNAc...) asparagine). The interval 404–427 is disordered; it reads MRLRPEPVLDNPPPRPIRALRPGH.

The protein belongs to the galactose-3-O-sulfotransferase family. The cofactor is Mg(2+).

It is found in the golgi apparatus. Its subcellular location is the golgi stack membrane. It functions in the pathway protein modification; carbohydrate sulfation. Its function is as follows. Transfers a sulfate to position 3 of non-reducing beta-galactosyl residues in N-glycans and core2-branched O-glycans. Has high activity towards Gal-beta-1,4-GlcNAc, Gal-beta-1,4(Fuc-alpha-1,3)GlcNAc and lower activity towards Gal-beta-1,3(Fuc-alpha-1,4)GlcNAc. In Bos taurus (Bovine), this protein is Galactose-3-O-sulfotransferase 3 (GAL3ST3).